Consider the following 460-residue polypeptide: Phosphoenolpyruvate carboxylase (460 aa).

This sequence belongs to the PEPCase type 2 family. Homotetramer. Mg(2+) is required as a cofactor.

The enzyme catalyses oxaloacetate + phosphate = phosphoenolpyruvate + hydrogencarbonate. Its function is as follows. Catalyzes the irreversible beta-carboxylation of phosphoenolpyruvate (PEP) to form oxaloacetate (OAA), a four-carbon dicarboxylic acid source for the tricarboxylic acid cycle. This Pyrobaculum arsenaticum (strain DSM 13514 / JCM 11321 / PZ6) protein is Phosphoenolpyruvate carboxylase.